A 187-amino-acid chain; its full sequence is BLOC-1-related complex subunit 8 homolog (187 aa).

The segment at 165-187 (QSQHETANDTRQGYNDDANNDQD) is disordered.

Belongs to the BORCS8 family.

It localises to the lysosome membrane. Functionally, may participate in the coupling of lysosomes to microtubule plus-end-directed kinesin motor. This chain is BLOC-1-related complex subunit 8 homolog, found in Nematostella vectensis (Starlet sea anemone).